The sequence spans 907 residues: MPSDILEPRGVPTPSHFHEDIRITPEKQFGFMKNNPMPEGGVDRSSNLPTSSWTSDSYQLSQQSSLSGALPSFIPNGRTTTNDTHWESSLFSSSLSDLFSRKLRLPRSDKLAFMSANREEEPSESLEEMEAQTIGNLLPDEDDLFAEVVGEGVHKSRANGGDDLDDCDLFSSVGGMELDGDVFSSVSQRDGKRGSNVSTVAEHPQGEILSRILFVRNVDSSIEDCELGVLFKQFGDVRALHTAGKNRGFIMVSYYDIRAAQKAARALHGRLLRGRKLDIRYSIPKENPKENSSEGALWVNNLDSSISNEELHGIFSSYGEIREVRRTMHENSQVYIEFFDVRKAKVALQGLNGLEVAGRQLKLAPTCPEGTSFWPQFASDDGEGGLPKMAFNNLSSAHMGRHFPGILASTSIDGGSIRGMHNSVGSPMNSFIERHQSLDVPIGLPPSARVISASKPVGLQEFGNPFDNSKTGIQSMPNLHPHFPDYLDNFASGSPYKSSTTFSEMVSDGQKANEGFMMSNVRGVGVDGFNGGVIGSPINQGSHRGNLNLWSNSNSQQHNQSSGMMWPNSPSRVNGVPSQRIPPVTAFSRASPLMVNMASSPVHHHIGSAPVLNSPFWDRRQAYVAESPESSGFHLGSPGSMGFPGSSPSHPMDFGSHKVFSHVGGNRMEANSKNAVLRSSRQMPHLFTGRSPMLSVSGSFDLPNERYRNLSHRRSESNSSNAEKKLYELDVDRILRGEDSRTTLMIKNIPNKYTSKMLLAAIDEYCKGTYDFLYLPIDFKNKCNVGYAFINLIEPENIVPFYKAFNGKKWEKFNSEKVASLAYGRIQGKSALIAHFQNSSLMNEDKRCRPILFHTAGPNAGDQEPFPMGSNIRSRPGKHRTNSIENYTNFSSSSDNRDEPANGNDSM.

Positions 28–58 (QFGFMKNNPMPEGGVDRSSNLPTSSWTSDSY) are disordered. Over residues 44–54 (RSSNLPTSSWT) the composition is skewed to polar residues. 2 RRM domains span residues 211–284 (RILF…YSIP) and 295–368 (GALW…PTCP). The segment at 856 to 907 (AGPNAGDQEPFPMGSNIRSRPGKHRTNSIENYTNFSSSSDNRDEPANGNDSM) is disordered. A compositionally biased stretch (polar residues) spans 883 to 894 (SIENYTNFSSSS).

Functionally, probable RNA-binding protein that plays a role in meiosis and vegetative growth. This is Protein MEI2-like 4 (ML4) from Arabidopsis thaliana (Mouse-ear cress).